The primary structure comprises 332 residues: Formamidase (332 aa).

The CN hydrolase domain maps to 14 to 259 (FLTALIQYPV…WEIVTAEVYP (246 aa)). Catalysis depends on E60, which acts as the Proton acceptor. K132 serves as the catalytic Proton donor. C165 functions as the Nucleophile in the catalytic mechanism.

The protein belongs to the carbon-nitrogen hydrolase superfamily. Aliphatic amidase family.

It carries out the reaction formamide + H2O = formate + NH4(+). Is an aliphatic amidase with a restricted substrate specificity, as it only hydrolyzes formamide. The polypeptide is Formamidase (Bacillus cereus (strain B4264)).